The primary structure comprises 440 residues: Chromosome partition protein MukF (440 aa).

The segment at 208 to 236 (LSETSGTLRELQDTLEAAGDKLQANLLRI) is leucine-zipper.

It belongs to the MukF family. In terms of assembly, interacts, and probably forms a ternary complex, with MukE and MukB via its C-terminal region. The complex formation is stimulated by calcium or magnesium. It is required for an interaction between MukE and MukB.

It localises to the cytoplasm. It is found in the nucleoid. Functionally, involved in chromosome condensation, segregation and cell cycle progression. May participate in facilitating chromosome segregation by condensation DNA from both sides of a centrally located replisome during cell division. Not required for mini-F plasmid partitioning. Probably acts via its interaction with MukB and MukE. Overexpression results in anucleate cells. It has a calcium binding activity. This chain is Chromosome partition protein MukF, found in Shigella boydii serotype 4 (strain Sb227).